The following is a 476-amino-acid chain: Protein transport protein Sec61 subunit alpha isoform 1 (476 aa).

Residues 1 to 33 are Cytoplasmic-facing; that stretch reads MGIKFLEVIKPFCVILPEIQKPERKIQFKEKVL. A helical membrane pass occupies residues 34-53; it reads WTAITLFIFLVCCQIPLFGI. At 54-76 the chain is on the lumenal side; it reads MSSDSADPFYWMRVILASNRGTL. Residues 77–96 traverse the membrane as a helical segment; it reads MELGISPIVTSGLIMQLLAG. Residues 97–117 lie on the Cytoplasmic side of the membrane; the sequence is AKIIEVGDTPKDRALFNGAQK. Residues 118 to 138 traverse the membrane as a helical segment; sequence LFGMTITIGQSIVYVMTGMYG. Residues 139–144 are Lumenal-facing; that stretch reads DPSEMG. A helical membrane pass occupies residues 145-165; the sequence is AGVCLLITIQLFVAGLIVLLL. At 166 to 172 the chain is on the cytoplasmic side; sequence DELLQKG. The helical transmembrane segment at 173 to 193 threads the bilayer; the sequence is YGLGSGISLFIATNICETIVW. Topologically, residues 194 to 240 are lumenal; sequence KAFSPTTVNTGRGMEFEGAIIALFHLLATRTDKVRALREAFYRQNLP. A helical membrane pass occupies residues 241–261; the sequence is NLMNLIATIFVFAVVIYFQGF. The Cytoplasmic portion of the chain corresponds to 262 to 288; sequence RVDLPIKSARYRGQYNTYPIKLFYTSN. A helical transmembrane segment spans residues 289-309; it reads IPIILQSALVSNLYVISQMLS. Residues 310–354 lie on the Lumenal side of the membrane; that stretch reads ARFSGNLLVSLLGTWSDTSSGGPARAYPVGGLCYYLSPPESFGSV. Residues 355 to 375 traverse the membrane as a helical segment; it reads LEDPVHAVVYIVFMLGSCAFF. At 376–420 the chain is on the cytoplasmic side; the sequence is SKTWIEVSGSSAKDVAKQLKEQQMVMRGHRETSMVHELNRYIPTA. The helical transmembrane segment at 421 to 441 threads the bilayer; sequence AAFGGLCIGALSVLADFLGAI. The Lumenal portion of the chain corresponds to 442 to 445; that stretch reads GSGT. A helical membrane pass occupies residues 446–462; that stretch reads GILLAVTIIYQYFEIFV. Residues 463-476 lie on the Cytoplasmic side of the membrane; it reads KEQSEVGSMGALLF.

It belongs to the SecY/SEC61-alpha family. The SEC61 channel-forming translocon complex consists of channel-forming core components SEC61A1, SEC61B and SEC61G and different auxiliary components such as SEC62 and SEC63. The SEC61 channel associates with the multi-pass translocon (MPT) complex.

It is found in the endoplasmic reticulum membrane. Functionally, component of SEC61 channel-forming translocon complex that mediates transport of signal peptide-containing precursor polypeptides across the endoplasmic reticulum (ER). Forms a ribosome receptor and a gated pore in the ER membrane, both functions required for cotranslational translocation of nascent polypeptides. May cooperate with auxiliary protein SEC62, SEC63 and HSPA5/BiP to enable post-translational transport of small presecretory proteins. The SEC61 channel is also involved in ER membrane insertion of transmembrane proteins: it mediates membrane insertion of the first few transmembrane segments of proteins, while insertion of subsequent transmembrane regions of multi-pass membrane proteins is mediated by the multi-pass translocon (MPT) complex. The SEC61 channel cooperates with the translocating protein TRAM1 to import nascent proteins into the ER. Controls the passive efflux of calcium ions from the ER lumen to the cytosol through SEC61 channel, contributing to the maintenance of cellular calcium homeostasis. Plays a critical role in nephrogenesis, specifically at pronephros stage. This is Protein transport protein Sec61 subunit alpha isoform 1 (SEC61A1) from Bos taurus (Bovine).